A 148-amino-acid chain; its full sequence is Aspartate carbamoyltransferase regulatory chain (148 aa).

4 residues coordinate Zn(2+): C106, C111, C134, and C137.

The protein belongs to the PyrI family. Contains catalytic and regulatory chains. It depends on Zn(2+) as a cofactor.

Functionally, involved in allosteric regulation of aspartate carbamoyltransferase. The chain is Aspartate carbamoyltransferase regulatory chain from Methanococcus maripaludis (strain DSM 14266 / JCM 13030 / NBRC 101832 / S2 / LL).